Consider the following 212-residue polypeptide: Imidazole glycerol phosphate synthase subunit HisH (212 aa).

A Glutamine amidotransferase type-1 domain is found at 2-212 (QTAIIDYGMG…LTMLKNFLNW (211 aa)). Residue Cys-85 is the Nucleophile of the active site. Catalysis depends on residues His-194 and Glu-196.

Heterodimer of HisH and HisF.

It localises to the cytoplasm. It carries out the reaction 5-[(5-phospho-1-deoxy-D-ribulos-1-ylimino)methylamino]-1-(5-phospho-beta-D-ribosyl)imidazole-4-carboxamide + L-glutamine = D-erythro-1-(imidazol-4-yl)glycerol 3-phosphate + 5-amino-1-(5-phospho-beta-D-ribosyl)imidazole-4-carboxamide + L-glutamate + H(+). It catalyses the reaction L-glutamine + H2O = L-glutamate + NH4(+). Its pathway is amino-acid biosynthesis; L-histidine biosynthesis; L-histidine from 5-phospho-alpha-D-ribose 1-diphosphate: step 5/9. IGPS catalyzes the conversion of PRFAR and glutamine to IGP, AICAR and glutamate. The HisH subunit catalyzes the hydrolysis of glutamine to glutamate and ammonia as part of the synthesis of IGP and AICAR. The resulting ammonia molecule is channeled to the active site of HisF. This Neisseria gonorrhoeae (strain ATCC 700825 / FA 1090) protein is Imidazole glycerol phosphate synthase subunit HisH.